Reading from the N-terminus, the 317-residue chain is Glycine--tRNA ligase alpha subunit (317 aa).

Belongs to the class-II aminoacyl-tRNA synthetase family. In terms of assembly, tetramer of two alpha and two beta subunits.

The protein localises to the cytoplasm. It carries out the reaction tRNA(Gly) + glycine + ATP = glycyl-tRNA(Gly) + AMP + diphosphate. This Acidovorax ebreus (strain TPSY) (Diaphorobacter sp. (strain TPSY)) protein is Glycine--tRNA ligase alpha subunit.